The sequence spans 163 residues: Succinate dehydrogenase assembly factor 2, mitochondrial (163 aa).

It belongs to the SDHAF2 family. As to quaternary structure, interacts with the flavoprotein subunit within the SDH catalytic dimer.

It localises to the mitochondrion matrix. Its function is as follows. Plays an essential role in the assembly of succinate dehydrogenase (SDH), an enzyme complex (also referred to as respiratory complex II) that is a component of both the tricarboxylic acid (TCA) cycle and the mitochondrial electron transport chain, and which couples the oxidation of succinate to fumarate with the reduction of ubiquinone (coenzyme Q) to ubiquinol. Required for flavinylation (covalent attachment of FAD) of the flavoprotein subunit of the SDH catalytic dimer. The sequence is that of Succinate dehydrogenase assembly factor 2, mitochondrial from Kluyveromyces lactis (strain ATCC 8585 / CBS 2359 / DSM 70799 / NBRC 1267 / NRRL Y-1140 / WM37) (Yeast).